The following is a 550-amino-acid chain: Transcriptional repressor RHIT (550 aa).

Disordered regions lie at residues 1 to 67, 174 to 200, and 216 to 296; these read MSAD…ETRA, VQGKGEAPGSSRQLGHEEEEKRGVVEV, and KSFK…EGLA. Composition is skewed to basic and acidic residues over residues 11–22, 45–58, and 187–200; these read AQDKERARETPG, ESPHIKMEPEEPHP, and LGHEEEEKRGVVEV. Positions 124-193 constitute a KRAB domain; it reads VTFEDMALYL…SRQLGHEEEE (70 aa). A Glycyl lysine isopeptide (Lys-Gly) (interchain with G-Cter in SUMO2) cross-link involves residue Lys-216. Residues 267–281 show a composition bias toward basic and acidic residues; it reads DLPKTQEGHFPEQPR. Ser-290 is subject to Phosphoserine. C2H2-type zinc fingers lie at residues 306 to 328, 334 to 356, 362 to 384, 390 to 412, 418 to 440, 446 to 468, 474 to 496, and 502 to 524; these read YKCEQCGKAFSWHSHLVTHRRTH, YACTDCGKRFGRSSHLIQHQIIH, YTCPSCWKSFSHHSTLIQHQRIH, YVCDRCAKRFTRRSDLVTHQGTH, HKCPICGKCFTQSSALVTHQRTH, YPCPECGKCFSQRSNLIAHNRTH, YHCLDCGKSFSHSSHLTAHQRTH, and YSCPLCGKSFSRRSNLHRHEKIH.

The protein belongs to the krueppel C2H2-type zinc-finger protein family.

It localises to the nucleus. In terms of biological role, transcriptional repressor involved in regulating MPV17L expression. By regulating MPV17L expression, contributes to the regulation of genes involved in H(2)O(2) metabolism and the mitochondrial apoptotic cascade. The chain is Transcriptional repressor RHIT (ZNF205) from Bos taurus (Bovine).